A 469-amino-acid chain; its full sequence is 2-amino-4-ketopentanoate thiolase beta subunit (469 aa).

Lys102 is modified (N6-(pyridoxal phosphate)lysine). Residues Asn128 and Ala238–Asn242 contribute to the pyridoxal 5'-phosphate site.

Belongs to the threonine synthase family. As to quaternary structure, heterodimer with OrtA. Requires pyridoxal 5'-phosphate as cofactor.

It catalyses the reaction D-alanine + acetyl-CoA = (2R)-2-amino-4-oxopentanoate + CoA. With respect to regulation, completely inhibited by p-chloromercuribenzoate (p-ClHgBzO) and acetyl-CoA, and partially inhibited by N-ethylmaleimide. Involved in the ornithine fermentation pathway. Catalyzes the thiolytic cleavage of 2-amino-4-ketopentanoate (AKP) with coenzyme A (CoA) to form acetyl-CoA and alanine. It is strictly specific for AKP. The protein is 2-amino-4-ketopentanoate thiolase beta subunit of Acetoanaerobium sticklandii (strain ATCC 12662 / DSM 519 / JCM 1433 / CCUG 9281 / NCIMB 10654 / HF) (Clostridium sticklandii).